Consider the following 153-residue polypeptide: D-aminoacyl-tRNA deacylase (153 aa).

The Gly-cisPro motif, important for rejection of L-amino acids signature appears at 137–138; the sequence is GP.

This sequence belongs to the DTD family. As to quaternary structure, homodimer.

It localises to the cytoplasm. The enzyme catalyses glycyl-tRNA(Ala) + H2O = tRNA(Ala) + glycine + H(+). The catalysed reaction is a D-aminoacyl-tRNA + H2O = a tRNA + a D-alpha-amino acid + H(+). An aminoacyl-tRNA editing enzyme that deacylates mischarged D-aminoacyl-tRNAs. Also deacylates mischarged glycyl-tRNA(Ala), protecting cells against glycine mischarging by AlaRS. Acts via tRNA-based rather than protein-based catalysis; rejects L-amino acids rather than detecting D-amino acids in the active site. By recycling D-aminoacyl-tRNA to D-amino acids and free tRNA molecules, this enzyme counteracts the toxicity associated with the formation of D-aminoacyl-tRNA entities in vivo and helps enforce protein L-homochirality. The sequence is that of D-aminoacyl-tRNA deacylase from Dehalococcoides mccartyi (strain ATCC BAA-2266 / KCTC 15142 / 195) (Dehalococcoides ethenogenes (strain 195)).